We begin with the raw amino-acid sequence, 409 residues long: uncharacterized protein (409 aa).

Residue His46 participates in Zn(2+) binding. Glu49 functions as the Proton acceptor in the catalytic mechanism. His50 and Glu126 together coordinate Zn(2+).

Belongs to the peptidase M16 family. The cofactor is Zn(2+).

This is an uncharacterized protein from Bacillus subtilis (strain 168).